A 95-amino-acid chain; its full sequence is Large ribosomal subunit protein uL23 (95 aa).

The protein belongs to the universal ribosomal protein uL23 family. Part of the 50S ribosomal subunit. Contacts protein L29, and trigger factor when it is bound to the ribosome.

In terms of biological role, one of the early assembly proteins it binds 23S rRNA. One of the proteins that surrounds the polypeptide exit tunnel on the outside of the ribosome. Forms the main docking site for trigger factor binding to the ribosome. This chain is Large ribosomal subunit protein uL23, found in Levilactobacillus brevis (strain ATCC 367 / BCRC 12310 / CIP 105137 / JCM 1170 / LMG 11437 / NCIMB 947 / NCTC 947) (Lactobacillus brevis).